The chain runs to 258 residues: Kallikrein-1 (258 aa).

The N-terminal stretch at 1–18 is a signal peptide; sequence MWFLVLCLALSLGGTGAA. Positions 19–24 are cleaved as a propeptide — activation peptide; it reads PPIQSR. A Peptidase S1 domain is found at 25 to 255; the sequence is IVGGWECSQP…YVKWIEDTIA (231 aa). Cystine bridges form between Cys31–Cys170, Cys47–Cys63, Cys149–Cys216, Cys181–Cys195, and Cys206–Cys231. His62 acts as the Charge relay system in catalysis. O-linked (GalNAc...) serine glycosylation occurs at Ser90. Residue Asn99 is glycosylated (N-linked (GlcNAc...) asparagine). A glycan (O-linked (GalNAc...) serine) is linked at Ser101. A glycan (N-linked (GlcNAc...) asparagine) is linked at Asn105. The active-site Charge relay system is Asp117. Asn161 is a glycosylation site (N-linked (GlcNAc...) asparagine). Residue Ser163 is glycosylated (O-linked (GalNAc...) serine). Catalysis depends on Ser210, which acts as the Charge relay system.

Belongs to the peptidase S1 family. Kallikrein subfamily.

It carries out the reaction Preferential cleavage of Arg-|-Xaa bonds in small molecule substrates. Highly selective action to release kallidin (lysyl-bradykinin) from kininogen involves hydrolysis of Met-|-Xaa or Leu-|-Xaa.. Glandular kallikreins cleave Met-Lys and Arg-Ser bonds in kininogen to release Lys-bradykinin. The polypeptide is Kallikrein-1 (KLK1) (Papio hamadryas (Hamadryas baboon)).